The primary structure comprises 90 residues: Putative Fis-like DNA-binding protein (90 aa).

A DNA-binding region (H-T-H motif) is located at residues 66 to 85; sequence QSRAAALLGIHRATLRKKLK.

The protein belongs to the transcriptional regulatory Fis family.

The polypeptide is Putative Fis-like DNA-binding protein (Xylella fastidiosa (strain 9a5c)).